The following is a 646-amino-acid chain: MAEDTGTNNEGTGCSGWFLVEAVVERTTGQQISDDEDETVEDSGLDMVDFIDDRPITHNSVEAQALLNEQEADAHYAAVQDLKRKYLGSPYVSPLGHVEQSVDCDISPRLDAIKLSRNSKKVKRRLFQSREITDSGYGYSEVEAETQVERNGEPENDCGGGGHGRDKEGEGQVHTEVHTGSQIEEHTGTTRVLELLKCKDVRATLYGKFKDCYGLSFTDLIRPFKSDKTTCGDWVVAAFGIHHSVSEAFEKLMQPLTTYMHIQWLTNAWGMVLLVLIRFKVNKSRCTVARTLATFLNIPEDHMLIEPPKIQSSVAALYWFRTGISNASIVTGETPEWIKRQTIVEHGLADNQFKLTEMVQWAYDNDFCDESEIAFEYAQRGDFDSNARAFLNSNCQAKYVKDCATMCKHYKNAEMKKMSMKQWITYRSKKIEEAGNWKPIVQFLRHQNIEFIPFLSKLKLWLHGTPKKNCIAIVGPPDTGKSCFCMSLIKFLGGTVISYVNSSSHFWLQPLCNAKVALLDDATQSCWVYMDTYMRNLLDGNPMSIDRKHKSLALIKCPPLLVTSNVDITKDDKYKYLYSRVTTLTFPNPFPFDRNGNAVYELSDANWKCFFTRLSASLDIQDSEDEDDGDNSQAFRCVPGTVVRTV.

Residues 83-85 (KRK) carry the Nuclear localization signal motif. Phosphoserine; by host is present on residues S89, S93, and S107. A Nuclear export signal motif is present at residues 106–115 (ISPRLDAIKL). Residues 145–185 (ETQVERNGEPENDCGGGGHGRDKEGEGQVHTEVHTGSQIEE) form a disordered region. Positions 163–185 (HGRDKEGEGQVHTEVHTGSQIEE) are enriched in basic and acidic residues. Positions 184–350 (EEHTGTTRVL…QTIVEHGLAD (167 aa)) are DNA-binding region. In terms of domain architecture, SF3 helicase spans 449-599 (IEFIPFLSKL…FPFDRNGNAV (151 aa)). An ATP-binding site is contributed by 475-482 (GPPDTGKS). Residue K556 forms a Glycyl lysine isopeptide (Lys-Gly) (interchain with G-Cter in SUMO) linkage.

It belongs to the papillomaviridae E1 protein family. Can form hexamers. Interacts with E2 protein; this interaction increases E1 DNA binding specificity. Interacts with host DNA polymerase subunit POLA2. Interacts with host single stranded DNA-binding protein RPA1. Interacts with host TOP1; this interaction stimulates the enzymatic activity of TOP1. In terms of processing, phosphorylated. Post-translationally, sumoylated.

The protein localises to the host nucleus. It catalyses the reaction Couples ATP hydrolysis with the unwinding of duplex DNA by translocating in the 3'-5' direction.. It carries out the reaction ATP + H2O = ADP + phosphate + H(+). Functionally, ATP-dependent DNA 3'-5' helicase required for initiation of viral DNA replication. It forms a complex with the viral E2 protein. The E1-E2 complex binds to the replication origin which contains binding sites for both proteins. During the initial step, a dimer of E1 interacts with a dimer of protein E2 leading to a complex that binds the viral origin of replication with high specificity. Then, a second dimer of E1 displaces the E2 dimer in an ATP-dependent manner to form the E1 tetramer. Following this, two E1 monomers are added to each half of the site, which results in the formation of two E1 trimers on the viral ori. Subsequently, two hexamers will be created. The double hexamer acts as a bi-directional helicase machinery and unwinds the viral DNA and then recruits the host DNA polymerase to start replication. This is Replication protein E1 from Homo sapiens (Human).